Here is a 269-residue protein sequence, read N- to C-terminus: Phosphonates import ATP-binding protein PhnC (269 aa).

Residues 8 to 251 (IHLYGASLRH…LLDALYANEQ (244 aa)) form the ABC transporter domain. 40 to 47 (GPSGAGKS) contacts ATP.

Belongs to the ABC transporter superfamily. Phosphonates importer (TC 3.A.1.9.1) family. The complex is composed of two ATP-binding proteins (PhnC), two transmembrane proteins (PhnE) and a solute-binding protein (PhnD).

The protein resides in the cell inner membrane. It catalyses the reaction phosphonate(out) + ATP + H2O = phosphonate(in) + ADP + phosphate + H(+). Its function is as follows. Part of the ABC transporter complex PhnCDE involved in phosphonates import. Responsible for energy coupling to the transport system. The chain is Phosphonates import ATP-binding protein PhnC from Pseudomonas putida (strain ATCC 47054 / DSM 6125 / CFBP 8728 / NCIMB 11950 / KT2440).